The following is a 201-amino-acid chain: Potassium-transporting ATPase KdpC subunit (201 aa).

A helical membrane pass occupies residues Pro-7–Met-27.

This sequence belongs to the KdpC family. As to quaternary structure, the system is composed of three essential subunits: KdpA, KdpB and KdpC.

The protein resides in the cell inner membrane. Part of the high-affinity ATP-driven potassium transport (or Kdp) system, which catalyzes the hydrolysis of ATP coupled with the electrogenic transport of potassium into the cytoplasm. This subunit acts as a catalytic chaperone that increases the ATP-binding affinity of the ATP-hydrolyzing subunit KdpB by the formation of a transient KdpB/KdpC/ATP ternary complex. The polypeptide is Potassium-transporting ATPase KdpC subunit (Xanthobacter autotrophicus (strain ATCC BAA-1158 / Py2)).